The sequence spans 252 residues: Trans-aconitate 2-methyltransferase (252 aa).

Belongs to the methyltransferase superfamily. Tam family.

The protein localises to the cytoplasm. It catalyses the reaction trans-aconitate + S-adenosyl-L-methionine = (E)-3-(methoxycarbonyl)pent-2-enedioate + S-adenosyl-L-homocysteine. Its function is as follows. Catalyzes the S-adenosylmethionine monomethyl esterification of trans-aconitate. The protein is Trans-aconitate 2-methyltransferase of Enterobacter sp. (strain 638).